The primary structure comprises 1025 residues: Myosin phosphatase Rho-interacting protein (1025 aa).

The segment at 2 to 383 (SAAKENPCRK…DRRSTEPSVT (382 aa)) is interaction with F-actin. Residues 43-150 (KPIYGGWLLL…WLEMLMVYPR (108 aa)) form the PH 1 domain. Disordered stretches follow at residues 152–302 (NKQN…RRSQ) and 317–383 (HMET…PSVT). Low complexity predominate over residues 179–189 (SSSSSSSSSSS). Residues S192, S217, S218, S220, S224, and S226 each carry the phosphoserine modification. Residues 217 to 236 (SSLSPAQSPSQSQPPAASSL) are compositionally biased toward low complexity. A compositionally biased stretch (basic and acidic residues) spans 239 to 263 (PGLESKEEESAMSSDRMDCGRKVRV). A phosphoserine mark is found at S265 and S269. A compositionally biased stretch (basic and acidic residues) spans 271 to 281 (EKTKQDLKAEE). Residues 284 to 294 (LPPPLSPPSPS) show a composition bias toward pro residues. A phosphoserine mark is found at S289 and S292. T295 is modified (phosphothreonine). Phosphoserine is present on S326. Basic and acidic residues predominate over residues 332–348 (RQGRSEKRAFPRKRDFT). The residue at position 348 (T348) is a Phosphothreonine. A phosphoserine mark is found at S362 and S365. Positions 387 to 483 (LNFKKGWLTK…WIQTIMKHVH (97 aa)) constitute a PH 2 domain. Disordered regions lie at residues 485–545 (TTAP…TFDW) and 560–591 (VGGV…RREE). S493 carries the phosphoserine modification. Basic and acidic residues-rich tracts occupy residues 524-545 (PEQK…TFDW) and 567-589 (DTHE…ARRR). The segment at 546–824 (AEFRPIQQAL…SVQRELEVLS (279 aa)) is interaction with RHOA. Position 619 is a phosphoserine (S619). T646 carries the post-translational modification Phosphothreonine. Phosphoserine occurs at positions 663 and 800. The stretch at 673-977 (HELTSLLEKE…AATEALGEKS (305 aa)) forms a coiled coil. The tract at residues 824-879 (SEQYSQKCLENAHLAQALEAERQALRQCQRENQELNAHNQELNNRLAAEITRLRTL) is interaction with PPP1R12A. S891, S977, S993, S1014, and S1016 each carry phosphoserine.

As to quaternary structure, binds F-actin through its N-terminus. Interacts with MYZAP. Binds RHOA, PPP1R12A/MBS and PPP1R12C/MBS85 through adjacent coiled coil domains.

It localises to the cytoplasm. The protein resides in the cytoskeleton. In terms of biological role, targets myosin phosphatase to the actin cytoskeleton. Required for the regulation of the actin cytoskeleton by RhoA and ROCK1. Depletion leads to an increased number of stress fibers in smooth muscle cells through stabilization of actin fibers by phosphorylated myosin. Overexpression of MRIP as well as its F-actin-binding region leads to disassembly of stress fibers in neuronal cells. The chain is Myosin phosphatase Rho-interacting protein (MPRIP) from Homo sapiens (Human).